The sequence spans 331 residues: Probable tRNA-dihydrouridine synthase (331 aa).

Residues 17 to 19 and Q72 contribute to the FMN site; that span reads PMS. Catalysis depends on C102, which acts as the Proton donor. Residues K141, 202-204, and 226-227 contribute to the FMN site; these read NGD and GR.

The protein belongs to the Dus family. FMN is required as a cofactor.

The catalysed reaction is a 5,6-dihydrouridine in tRNA + NAD(+) = a uridine in tRNA + NADH + H(+). It catalyses the reaction a 5,6-dihydrouridine in tRNA + NADP(+) = a uridine in tRNA + NADPH + H(+). In terms of biological role, catalyzes the synthesis of 5,6-dihydrouridine (D), a modified base found in the D-loop of most tRNAs, via the reduction of the C5-C6 double bond in target uridines. In Rickettsia conorii (strain ATCC VR-613 / Malish 7), this protein is Probable tRNA-dihydrouridine synthase (dus).